Reading from the N-terminus, the 680-residue chain is tRNA 5-methylaminomethyl-2-thiouridine biosynthesis bifunctional protein MnmC (680 aa).

Positions 1–245 (MSHPPIQTAT…KREMLTGILP (245 aa)) are tRNA (mnm(5)s(2)U34)-methyltransferase. The FAD-dependent cmnm(5)s(2)U34 oxidoreductase stretch occupies residues 270-680 (IGGGIVSALT…PVQQRVSVLS (411 aa)).

This sequence in the N-terminal section; belongs to the methyltransferase superfamily. tRNA (mnm(5)s(2)U34)-methyltransferase family. The protein in the C-terminal section; belongs to the DAO family. FAD serves as cofactor.

It is found in the cytoplasm. The enzyme catalyses 5-aminomethyl-2-thiouridine(34) in tRNA + S-adenosyl-L-methionine = 5-methylaminomethyl-2-thiouridine(34) in tRNA + S-adenosyl-L-homocysteine + H(+). Its function is as follows. Catalyzes the last two steps in the biosynthesis of 5-methylaminomethyl-2-thiouridine (mnm(5)s(2)U) at the wobble position (U34) in tRNA. Catalyzes the FAD-dependent demodification of cmnm(5)s(2)U34 to nm(5)s(2)U34, followed by the transfer of a methyl group from S-adenosyl-L-methionine to nm(5)s(2)U34, to form mnm(5)s(2)U34. This chain is tRNA 5-methylaminomethyl-2-thiouridine biosynthesis bifunctional protein MnmC, found in Yersinia enterocolitica serotype O:8 / biotype 1B (strain NCTC 13174 / 8081).